The following is a 1173-amino-acid chain: MAVDTLSPDWDFDRVDDGSQKIHAEVQLKNYGRFLEEYTSQLRRIEDALDDLIGDVWDFNLDPIALKLLPYEQSSLLELIKTENKVLNKVITVYAALCCEIKKLKYEAETKFYNGLLFYGEGATDSSMVEGDCQIQMGRFVSFLQELSCFVTRCYEVVMNVIHQLAALYISNKIGPKIIETTGVHFQTMYEHLGELLTVLLTLDEIVDNHVTLKDHWTMYKRLLKSVHHNPSKFGIQEEKLKPFEKFLLKLEGQLLDGMIFQACIEQQFDSLNGGISVSKNSTFAEEFAHSIRSIFANVEAKLGEPSEIDQRDKYVGICGLFVLHFQIFRTVDKKFYKSLLDICKKVPAITLTANIIWFPDNFLIHKMPAAAKLLDRKSLQAIKIHRDTFLQQKAQSLNKDVQSYYVFVSSWMMKMESMLSKEQRMDTFAEDLTNRCNVFIQGFLYAYSISTIIKTTMNLYMSMQKPMTKTSVKALCRLIELLKAIEHMFYRRSMVVADSVSHITQHLQHQALSSISVAKKRVISDKKYSEQRLDVLSALVLAENTLNGPSTKQRRLIVSLALSVGTQMKTFKDEELFPLQVVMKKLDLISELRERVQAQCDCCFLYWHRAVFPIYLDDVYENAVDAARLHYMFSALRDCVPAMMHSRHLESHELLLDCYDKEIMDILNEHLLDKLCKEIEKDLRLSVHTHLKLDDRNPFKVGRKDLALFFSLNPIRFFNRFIDIRAYVTHYLDKTFYNLTTVALHDWATYSEMRNLATQRYGLVMTEAHLPSQTLEQGLDVLEIMRNIHIFVSRYLYNLNNQIFIERTSNNKHLNTINIRHIANSIRTHGTGIMNTTVNFTYQFLKKKFYIFSQFMYDEHIKSRLIKDIRFFREIKDQNDHKYPFDRAEKFNRGIRKLGITPEGQSYLDQFRQLISQIGNAMGYIRMIRSGGLHCSSNAIRFVPDLEDIVSFEELVKEEGLAEETLRAARHLDSVLSDHTRNSAEGTEYFKMLVDVFAPEFRRPKNIHLRNFYIIVPPLTLNFVEHSISCKEKLNKKNKLGAAFTDDGFAMGVAYTLKLLDQYQEFDSLHWFQSVREKYIKEIRAVAKQQNVQSTSQDEKLLQTMNLTQKRLEVYLQEFELLYFSLSSARIFFRADKTAAEENQEKKEKEEETKTSNGDGPESTVSADPVVK.

N-acetylalanine is present on Ala2. Ser7 is modified (phosphoserine). Residues 27 to 56 (QLKNYGRFLEEYTSQLRRIEDALDDLIGDV) adopt a coiled-coil conformation. The tract at residues 705-1173 (KDLALFFSLN…STVSADPVVK (469 aa)) is sufficient for interaction with WASHC5. The span at 1141-1155 (AEENQEKKEKEEETK) shows a compositional bias: basic and acidic residues. A disordered region spans residues 1141 to 1173 (AEENQEKKEKEEETKTSNGDGPESTVSADPVVK). Thr1154 carries the phosphothreonine modification.

It belongs to the SWIP family. As to quaternary structure, component of the WASH core complex also described as WASH regulatory complex (SHRC) composed of WASH (WASHC1, WASH2P or WASH3P), WASHC2 (WASHC2A or WASHC2C), WASHC3, WASHC4 and WASHC5. The WASH core complex associates via WASHC2 with the F-actin-capping protein dimer (formed by CAPZA1, CAPZA2 or CAPZA3 and CAPZB) in a transient or substoichiometric manner which was initially described as WASH complex.

Its subcellular location is the early endosome. Acts as a component of the WASH core complex that functions as a nucleation-promoting factor (NPF) at the surface of endosomes, where it recruits and activates the Arp2/3 complex to induce actin polymerization, playing a key role in the fission of tubules that serve as transport intermediates during endosome sorting. The protein is WASH complex subunit 4 of Mus musculus (Mouse).